Reading from the N-terminus, the 240-residue chain is Ribonuclease 3 (240 aa).

Positions 9 to 141 (VEEFQKETGI…LLAAIYLDQG (133 aa)) constitute an RNase III domain. Position 54 (glutamate 54) interacts with Mg(2+). Aspartate 58 is a catalytic residue. Residues aspartate 127 and glutamate 130 each coordinate Mg(2+). Residue glutamate 130 is part of the active site. The DRBM domain occupies 168 to 237 (DYKTALQEIV…ARIAYEKLLK (70 aa)).

It belongs to the ribonuclease III family. In terms of assembly, homodimer. Mg(2+) is required as a cofactor.

Its subcellular location is the cytoplasm. The catalysed reaction is Endonucleolytic cleavage to 5'-phosphomonoester.. Its function is as follows. Digests double-stranded RNA. Involved in the processing of primary rRNA transcript to yield the immediate precursors to the large and small rRNAs (23S and 16S). Also processes some mRNAs, and tRNAs when they are encoded in the rRNA operon. Probably processes pre-crRNA and tracrRNA of type II CRISPR loci if present in the organism. The polypeptide is Ribonuclease 3 (rnc) (Thermotoga maritima (strain ATCC 43589 / DSM 3109 / JCM 10099 / NBRC 100826 / MSB8)).